Reading from the N-terminus, the 558-residue chain is Xylulose kinase 2 (558 aa).

Substrate-binding positions include aspartate 16, 20–23, serine 111, and aspartate 283; that span reads QSMK. ATP-binding positions include threonine 305 and 456-460; that span reads GASAN.

Belongs to the FGGY kinase family. It depends on a divalent metal cation as a cofactor.

The protein localises to the cytoplasm. The enzyme catalyses D-xylulose + ATP = D-xylulose 5-phosphate + ADP + H(+). The protein operates within isoprenoid biosynthesis; carotenoid biosynthesis. Repressed by oxo-clomazone (keto-clomazone), a bleaching herbicide. Its function is as follows. Mediates 1-deoxy-D-xylulose (DX) phosphorylation in the cytoplasm prior to the translocation of 1-deoxy-D-xylulose 5-phosphate into plastids. Can also phosphorylate D-xylulose (Xyl). Uses preferentially ATP as cosubstrate. In Arabidopsis thaliana (Mouse-ear cress), this protein is Xylulose kinase 2.